The chain runs to 244 residues: Ribonuclease P protein component 3 (244 aa).

The protein belongs to the eukaryotic/archaeal RNase P protein component 3 family. In terms of assembly, consists of a catalytic RNA component and at least 4-5 protein subunits.

It localises to the cytoplasm. The catalysed reaction is Endonucleolytic cleavage of RNA, removing 5'-extranucleotides from tRNA precursor.. Functionally, part of ribonuclease P, a protein complex that generates mature tRNA molecules by cleaving their 5'-ends. The chain is Ribonuclease P protein component 3 from Methanopyrus kandleri (strain AV19 / DSM 6324 / JCM 9639 / NBRC 100938).